The chain runs to 294 residues: Glutamyl-Q tRNA(Asp) synthetase (294 aa).

L-glutamate is bound by residues 8–12 (RFAPT) and glutamate 44. The 'HIGH' region motif lies at 11 to 21 (PTPSGYLHFGS). Residues cysteine 100, cysteine 102, tyrosine 114, and cysteine 118 each coordinate Zn(2+). Positions 171 and 189 each coordinate L-glutamate. The short motif at 227-231 (KLGKS) is the 'KMSKS' region element. Lysine 230 provides a ligand contact to ATP.

The protein belongs to the class-I aminoacyl-tRNA synthetase family. GluQ subfamily. Zn(2+) is required as a cofactor.

In terms of biological role, catalyzes the tRNA-independent activation of glutamate in presence of ATP and the subsequent transfer of glutamate onto a tRNA(Asp). Glutamate is transferred on the 2-amino-5-(4,5-dihydroxy-2-cyclopenten-1-yl) moiety of the queuosine in the wobble position of the QUC anticodon. In Ectopseudomonas mendocina (strain ymp) (Pseudomonas mendocina), this protein is Glutamyl-Q tRNA(Asp) synthetase.